Reading from the N-terminus, the 417-residue chain is NADH-quinone oxidoreductase subunit D (417 aa).

Belongs to the complex I 49 kDa subunit family. In terms of assembly, NDH-1 is composed of 14 different subunits. Subunits NuoB, C, D, E, F, and G constitute the peripheral sector of the complex.

It is found in the cell inner membrane. It carries out the reaction a quinone + NADH + 5 H(+)(in) = a quinol + NAD(+) + 4 H(+)(out). NDH-1 shuttles electrons from NADH, via FMN and iron-sulfur (Fe-S) centers, to quinones in the respiratory chain. The immediate electron acceptor for the enzyme in this species is believed to be ubiquinone. Couples the redox reaction to proton translocation (for every two electrons transferred, four hydrogen ions are translocated across the cytoplasmic membrane), and thus conserves the redox energy in a proton gradient. The chain is NADH-quinone oxidoreductase subunit D from Acidovorax sp. (strain JS42).